The primary structure comprises 209 residues: Urease accessory protein UreE (209 aa).

The segment covering 170–196 (EHHGHSHSHSHDHDHDHDHDHDHDHQH) has biased composition (basic and acidic residues). The segment at 170–209 (EHHGHSHSHSHDHDHDHDHDHDHDHQHGPSCSHGHHHGHR) is disordered.

This sequence belongs to the UreE family.

The protein resides in the cytoplasm. Involved in urease metallocenter assembly. Binds nickel. Probably functions as a nickel donor during metallocenter assembly. This is Urease accessory protein UreE from Burkholderia mallei (strain NCTC 10247).